The chain runs to 161 residues: Cell division control protein 31 (161 aa).

4 EF-hand domains span residues 20–55, 56–91, 93–128, and 129–161; these read EQKQ…LGFE, LPKR…KILK, DPLD…LGET, and LTDE…CTDS. Ca(2+) is bound by residues aspartate 33, asparagine 35, aspartate 37, and glutamate 44. Threonine 130 carries the post-translational modification Phosphothreonine. Residues aspartate 142, aspartate 144, aspartate 146, glutamate 148, and glutamate 153 each contribute to the Ca(2+) site.

It belongs to the centrin family. As to quaternary structure, component of the spindle pole body (SPB), acting as the connector of microtubule arrays in the cytoplasm and the nucleoplasm, is involved in nuclear positioning before chromosome segregation, SPB separation, spindle formation, chromosome segregation, nuclear migration into the bud, nuclear reorientation after cytokinesis and nuclear fusion during conjugation. The SPB half-bridge, which is tightly associated with the cytoplasmic side of the nuclear envelope and the SPB, is playing a key role as the starting structure for and in the initiation of SPB duplication in G1. At the SPB half-bridge CDC31 interacts with KAR1, MPS3 and SFI1. Interacts with KIC1. Interacts with VPS13. Associates with nuclear pore complexes (NPCs).

The protein resides in the nucleus envelope. The protein localises to the cytoplasm. It localises to the cytoskeleton. Its subcellular location is the microtubule organizing center. It is found in the spindle pole body. Functions as a component of the spindle pole body (SPB) half-bridge. At the SPB, it is recruited by KAR1 and MPS3 to the SPB half-bridge and involved in the initial steps of SPB duplication. Also involved in connection with the protein kinase KIC1 in the maintenance of cell morphology and integrity. May play a role in vesicle-mediated transport, in a VPS13-dependent manner. This is Cell division control protein 31 (CDC31) from Saccharomyces cerevisiae (strain ATCC 204508 / S288c) (Baker's yeast).